A 112-amino-acid chain; its full sequence is MSNIYDLANELNRTFRELPEYKAVLESKAAIDADSEAKSLFDDYIAFQGKIQQLMQTGQMPTPELQEEMKSFGEKIQANAIVTEFFTKQQQLSVYLSDIERIVFEPIQDLMK.

This sequence belongs to the UPF0342 family.

The sequence is that of UPF0342 protein SGO_1370 from Streptococcus gordonii (strain Challis / ATCC 35105 / BCRC 15272 / CH1 / DL1 / V288).